We begin with the raw amino-acid sequence, 838 residues long: Periplasmic nitrate reductase (838 aa).

Residues Met1–Ala29 constitute a signal peptide (tat-type signal). One can recognise a 4Fe-4S Mo/W bis-MGD-type domain in the interval Leu41–Asp97. Residues Cys48, Cys51, Cys55, and Cys83 each contribute to the [4Fe-4S] cluster site. Mo-bis(molybdopterin guanine dinucleotide)-binding positions include Lys85, Gln152, Asn177, Cys181, Trp214 to Met221, Ser245 to His249, Met382, Gln386, Asn492, Ser518 to Asp519, Lys541, Asp568, and Thr728 to Ser737. Trp804 contributes to the substrate binding site. Asn812 and Lys829 together coordinate Mo-bis(molybdopterin guanine dinucleotide).

It belongs to the prokaryotic molybdopterin-containing oxidoreductase family. NasA/NapA/NarB subfamily. As to quaternary structure, component of the periplasmic nitrate reductase NapAB complex composed of NapA and NapB. [4Fe-4S] cluster is required as a cofactor. It depends on Mo-bis(molybdopterin guanine dinucleotide) as a cofactor. In terms of processing, predicted to be exported by the Tat system. The position of the signal peptide cleavage has not been experimentally proven.

Its subcellular location is the periplasm. It catalyses the reaction 2 Fe(II)-[cytochrome] + nitrate + 2 H(+) = 2 Fe(III)-[cytochrome] + nitrite + H2O. In terms of biological role, catalytic subunit of the periplasmic nitrate reductase complex NapAB. Receives electrons from NapB and catalyzes the reduction of nitrate to nitrite. The chain is Periplasmic nitrate reductase from Ralstonia pickettii (strain 12J).